A 96-amino-acid chain; its full sequence is MNITDVRIRRVDNKNPGSKLLAYVTVTFDDCLVLHNIRVIRGQKGVFIVMPNRRTKVGEYKDIVHPINQSFREILQSAIFKEYVKENPSSLELEIG.

This sequence belongs to the SpoVG family.

Its function is as follows. Could be involved in septation. The protein is Putative septation protein SpoVG of Borrelia hermsii (strain HS1 / DAH).